Here is a 601-residue protein sequence, read N- to C-terminus: Glutathione-regulated potassium-efflux system protein KefB (601 aa).

The next 13 membrane-spanning stretches (helical) occupy residues 5–25 (DLLLAGVLFLFAAVVAVPLAA), 29–49 (IGAVLGYLLAGIAIGPWGLGF), 55–75 (EILHFSELGVVFLMFIIGLEL), 87–107 (IFGVGAAQVLFSAVILGGLLM), 115–135 (AAVIGGIGLAMSSTAMALQLM), 152–172 (VLLFQDLAVIPALALVPLLAG), 177–197 (HFDWMKVGMKVLAFVGMLIGG), 207–227 (FIAASGVREVFTAATLLLVLG), 230–250 (LFMDALGLSMALGTFIAGILL), 261–281 (IAIDPFKGLLLGLFFISVGMA), 284–304 (LGVLYTHLLWVVVSVAVLVAV), 326–346 (FAGVLSQGGEFAFVLFSTAAS), and 356–376 (ALLLVTVTLSMMTTPLLMKLI). Residues 400–518 (KPQVIVVGFG…QAGVTNFSRE (119 aa)) form the RCK N-terminal domain.

It belongs to the monovalent cation:proton antiporter 2 (CPA2) transporter (TC 2.A.37) family. KefB subfamily. Interacts with the regulatory subunit KefG.

It localises to the cell inner membrane. Functionally, pore-forming subunit of a potassium efflux system that confers protection against electrophiles. Catalyzes K(+)/H(+) antiport. The sequence is that of Glutathione-regulated potassium-efflux system protein KefB from Enterobacter sp. (strain 638).